The following is a 451-amino-acid chain: Jacalin-related lectin 35 (451 aa).

At Ala2 the chain carries N-acetylalanine. 3 Jacalin-type lectin domains span residues 2 to 143, 156 to 297, and 306 to 448; these read AKKL…YIIP, LTKL…YIIP, and SNTI…NVAP.

This sequence belongs to the jacalin lectin family. Component of the PYK10 complex, at least composed of PYK10/BGLU23, BGLU21, BGLU22, JAL22, JAL23, PBP1/JAL30, PBP2/JAL31, JAL32, JAL33, JAL34, JAL35, GLL22 and GLL23.

The polypeptide is Jacalin-related lectin 35 (JAL35) (Arabidopsis thaliana (Mouse-ear cress)).